The following is a 1280-amino-acid chain: MASSNPPPQPAIGAPLAPSAPGPSPEVEEDSGEAFEFDDSDEEEDTSSGLVVPGLAPERDTEPSLICFDTVPGSDLDPAAAPPQTEAPTVVSNGDAVGAAISGVRRSSWKRKSSRRIDRFTFPALEEDVIYDDVPCESPDAHQPGAERGLVYEDVHRAGAPRETEDLGWSSSEFESYSEDSGEETKPEAEPTKHRGSFQPKLSPDLTRLKERYVRTKRDILALRVGGRDMQELKLKCDCKMTQLMKAAKSGTRDGLEKTRMAVMRKVSFLHRKDVLGDSEEEDMGLLEVGVTDIKPPAPELGPMPDGLSPQQVVRRHILGSIVQSEGSYVESLKRILQDYRNPLMEMEPKALSARKCQVVFFRVKEILHCHSMFQIALSSRVAEWDSTEKIGDLFVASFSKSMVLDVYSDYVNNFTNAMSIIKKACLTKPAFLEFLKRRQVCSTDRVTLYGLMVKPVQRFPQFILLLQDMLKNTPRGHPDRLSLQLALTELETLAEKLNEQKRLADQVAEIQQLTKSVSDRSSLNKLLTSGQRQLLLCETLTETVYGDRGQLIKSKERRVFLLNDMLVCANINFKPSNHRGQLEISSLVPLGPKYVVKWNTALPQVQVVEVGQDGGTYDKDNLLIQHAGAKKATAAGQAQNKVYLGPPRLFQELQDLQKDLAVVEQITLLISTLHGTYQNLNMTVAQDWCLALQRLMRVKEEEIHSANKCRLRLLLPGKPDKSGRPISFMVVFITPNPLSKISWVNRLHLAKIGLREENQPGWLCPDEDKKSKAPFWCPILACCVPAFSSRTLSLQLGGLVHSPVNSPLLGFSAVSTSLPQGYLWVGGGQEGAGGQVEIFSLNRPSPRTVKSFPVAAPVLCIEYIPDPEEEAEGAEESRAATDPSVTVHPTVCLGLQDGSILLYGSVDTGTQCLATCKSPGPQPVLCLRHSPFYLLAGLQDGTLAAYPRTSGDIPWDLESPPMCITVGPGPIRTLLSLEDAAWASCGPRVTVLDAATLQTQQSFEAHQDEAVSVTHMVKAGSGVWMAFSSGSSIRLFHTETLEHLQEINIATRTTFLLPGQKHLCVTSLLICQGLLWVGTDQGVIVLLPVPRLEGIPKITGKGMVSLNGHCGPVAFLAVAMSILAPDILRSDQEEAEGPQAEEDKPDGQAHETVPGPDSHTARELTRKKGILLQYRLRSTAHLPGPLLSVREPAPADGSALEHSEEDGSIYEMADDPDVWVRSRPCARDAHRKEICSVAIISGGQGYRHFGGAPGGLSGRAAPCSETDSTLLIWQVPLAL.

Positions 1-10 are enriched in pro residues; the sequence is MASSNPPPQP. The interval 1–94 is disordered; it reads MASSNPPPQP…TEAPTVVSNG (94 aa). Positions 26-46 are enriched in acidic residues; sequence EVEEDSGEAFEFDDSDEEEDT. Phosphoserine is present on Ser-40. The segment covering 78–89 has biased composition (low complexity); the sequence is PAAAPPQTEAPT. Residues Tyr-131 and Tyr-152 each carry the phosphotyrosine modification. The tract at residues 161-202 is disordered; sequence PRETEDLGWSSSEFESYSEDSGEETKPEAEPTKHRGSFQPKL. Over residues 183–193 the composition is skewed to basic and acidic residues; sequence EETKPEAEPTK. Ser-279 is modified (phosphoserine). Residues 314-501 form the DH domain; that stretch reads VRRHILGSIV…ETLAEKLNEQ (188 aa). Disordered stretches follow at residues 1133–1163 and 1186–1207; these read QEEA…HTAR and PLLS…SEED.

In terms of assembly, interacts with RHOA, RHOB and RHOC.

It is found in the cytoplasm. In terms of biological role, acts as a guanine nucleotide exchange factor (GEF) for RHOA, RHOB and RHOC. This is Rho guanine nucleotide exchange factor 10-like protein (Arhgef10l) from Mus musculus (Mouse).